We begin with the raw amino-acid sequence, 115 residues long: NADH-ubiquinone oxidoreductase chain 3 (115 aa).

Helical transmembrane passes span 3-23 (FVLI…ITFW), 55-75 (FFLV…LLPL), and 84-104 (LPLM…SLAY).

It belongs to the complex I subunit 3 family. Core subunit of respiratory chain NADH dehydrogenase (Complex I) which is composed of 45 different subunits. Interacts with TMEM186. Interacts with TMEM242.

The protein localises to the mitochondrion inner membrane. It carries out the reaction a ubiquinone + NADH + 5 H(+)(in) = a ubiquinol + NAD(+) + 4 H(+)(out). Its function is as follows. Core subunit of the mitochondrial membrane respiratory chain NADH dehydrogenase (Complex I) which catalyzes electron transfer from NADH through the respiratory chain, using ubiquinone as an electron acceptor. Essential for the catalytic activity of complex I. The chain is NADH-ubiquinone oxidoreductase chain 3 from Pan paniscus (Pygmy chimpanzee).